A 337-amino-acid chain; its full sequence is tRNA-dihydrouridine synthase B (337 aa).

Residues 19 to 21 (PMA) and Gln73 each bind FMN. The Proton donor role is filled by Cys103. Residues Lys142, 203 to 205 (NGD), and 227 to 228 (GR) contribute to the FMN site.

It belongs to the Dus family. DusB subfamily. FMN is required as a cofactor.

The enzyme catalyses a 5,6-dihydrouridine in tRNA + NAD(+) = a uridine in tRNA + NADH + H(+). The catalysed reaction is a 5,6-dihydrouridine in tRNA + NADP(+) = a uridine in tRNA + NADPH + H(+). Functionally, catalyzes the synthesis of 5,6-dihydrouridine (D), a modified base found in the D-loop of most tRNAs, via the reduction of the C5-C6 double bond in target uridines. The chain is tRNA-dihydrouridine synthase B from Pseudomonas syringae pv. tomato (strain ATCC BAA-871 / DC3000).